Consider the following 462-residue polypeptide: 3-isopropylmalate dehydratase large subunit (462 aa).

[4Fe-4S] cluster-binding residues include cysteine 337, cysteine 397, and cysteine 400.

This sequence belongs to the aconitase/IPM isomerase family. LeuC type 1 subfamily. Heterodimer of LeuC and LeuD. The cofactor is [4Fe-4S] cluster.

The catalysed reaction is (2R,3S)-3-isopropylmalate = (2S)-2-isopropylmalate. It functions in the pathway amino-acid biosynthesis; L-leucine biosynthesis; L-leucine from 3-methyl-2-oxobutanoate: step 2/4. In terms of biological role, catalyzes the isomerization between 2-isopropylmalate and 3-isopropylmalate, via the formation of 2-isopropylmaleate. This chain is 3-isopropylmalate dehydratase large subunit, found in Listeria welshimeri serovar 6b (strain ATCC 35897 / DSM 20650 / CCUG 15529 / CIP 8149 / NCTC 11857 / SLCC 5334 / V8).